Reading from the N-terminus, the 695-residue chain is UvrABC system protein B (695 aa).

One can recognise a Helicase ATP-binding domain in the interval 25-176; the sequence is KSISEGHRFQ…NQRDVLRDLA (152 aa). 38–45 is an ATP binding site; it reads GATGTGKT. The Beta-hairpin motif lies at 91 to 114; that stretch reads YYDYYQPEAYVPSTDTYIAKSSSI. In terms of domain architecture, Helicase C-terminal spans 454–617; it reads LLGEIYLRLE…ITPKPIVKKN (164 aa). The 36-residue stretch at 652 to 687 folds into the UVR domain; it reads PELIGQLELKMKEAAKNLEFEEAAQLRDRIKKLRQR.

This sequence belongs to the UvrB family. Forms a heterotetramer with UvrA during the search for lesions. Interacts with UvrC in an incision complex.

It is found in the cytoplasm. The UvrABC repair system catalyzes the recognition and processing of DNA lesions. A damage recognition complex composed of 2 UvrA and 2 UvrB subunits scans DNA for abnormalities. Upon binding of the UvrA(2)B(2) complex to a putative damaged site, the DNA wraps around one UvrB monomer. DNA wrap is dependent on ATP binding by UvrB and probably causes local melting of the DNA helix, facilitating insertion of UvrB beta-hairpin between the DNA strands. Then UvrB probes one DNA strand for the presence of a lesion. If a lesion is found the UvrA subunits dissociate and the UvrB-DNA preincision complex is formed. This complex is subsequently bound by UvrC and the second UvrB is released. If no lesion is found, the DNA wraps around the other UvrB subunit that will check the other stand for damage. The sequence is that of UvrABC system protein B from Synechococcus sp. (strain JA-2-3B'a(2-13)) (Cyanobacteria bacterium Yellowstone B-Prime).